A 325-amino-acid chain; its full sequence is Release factor glutamine methyltransferase (325 aa).

Residues glycine 141 to glycine 145, aspartate 164, tryptophan 193, and asparagine 207 contribute to the S-adenosyl-L-methionine site. Asparagine 207–tyrosine 210 is a substrate binding site. Residues leucine 306–alanine 325 are disordered.

It belongs to the protein N5-glutamine methyltransferase family. PrmC subfamily.

The enzyme catalyses L-glutaminyl-[peptide chain release factor] + S-adenosyl-L-methionine = N(5)-methyl-L-glutaminyl-[peptide chain release factor] + S-adenosyl-L-homocysteine + H(+). Methylates the class 1 translation termination release factors RF1/PrfA and RF2/PrfB on the glutamine residue of the universally conserved GGQ motif. This Rhodospirillum rubrum (strain ATCC 11170 / ATH 1.1.1 / DSM 467 / LMG 4362 / NCIMB 8255 / S1) protein is Release factor glutamine methyltransferase.